Reading from the N-terminus, the 206-residue chain is dITP/XTP pyrophosphatase (206 aa).

Position 10 to 15 (serine 10 to lysine 15) interacts with substrate. 2 residues coordinate Mg(2+): glutamate 40 and aspartate 69. Aspartate 69 (proton acceptor) is an active-site residue. Residues serine 70, phenylalanine 148–aspartate 151, lysine 171, and histidine 176–arginine 177 each bind substrate.

Belongs to the HAM1 NTPase family. In terms of assembly, homodimer. The cofactor is Mg(2+).

The catalysed reaction is XTP + H2O = XMP + diphosphate + H(+). It catalyses the reaction dITP + H2O = dIMP + diphosphate + H(+). It carries out the reaction ITP + H2O = IMP + diphosphate + H(+). In terms of biological role, pyrophosphatase that catalyzes the hydrolysis of nucleoside triphosphates to their monophosphate derivatives, with a high preference for the non-canonical purine nucleotides XTP (xanthosine triphosphate), dITP (deoxyinosine triphosphate) and ITP. Seems to function as a house-cleaning enzyme that removes non-canonical purine nucleotides from the nucleotide pool, thus preventing their incorporation into DNA/RNA and avoiding chromosomal lesions. This is dITP/XTP pyrophosphatase from Synechococcus sp. (strain CC9311).